Here is a 234-residue protein sequence, read N- to C-terminus: ASKGNGRGPYVQADLAYAAERITHDYPEPTGAKKAQLSTVSDYFRNIRTHSIHPRVSVGYDFGGWRIAADYARYRKWKESNSSIKKVTEDIKDNYKETKTEHQENGTFHAVSSLGLSTIYDFQISDKIKPYIGVRVGYGHVRHQVRSVGQETITVTPKPKNGTQGGPVKSTSPIPAYHENRSSRRLGFGAMAGVGIDVAPGLTLDAGYRYHYWGRLENTRFKTHEASLGVRYRF.

A1 is a signal peptide. The interval 154 to 179 (TVTPKPKNGTQGGPVKSTSPIPAYHE) is disordered.

Belongs to the opacity porin family.

It is found in the cell outer membrane. In terms of biological role, implicated in a number of adherence functions. OPA proteins are implicated in pathogenesis and are subject to phase variation. This chain is Opacity protein opA65, found in Neisseria gonorrhoeae.